The primary structure comprises 78 residues: U-scoloptoxin(04)-Er1a (78 aa).

An N-terminal signal peptide occupies residues 1 to 24; that stretch reads MTRHLIFAAVLLVCLFVCWNAIGA. The propeptide occupies 25–28; that stretch reads QDAR.

It belongs to the scoloptoxin-04 family. Post-translationally, contains 2 disulfide bonds. As to expression, expressed by the venom gland.

It localises to the secreted. This is U-scoloptoxin(04)-Er1a from Ethmostigmus rubripes (Giant centipede).